We begin with the raw amino-acid sequence, 299 residues long: Muscleblind-like protein (299 aa).

C3H1-type zinc fingers lie at residues 38–66 (WLQV…HPPP) and 72–100 (QGRV…HPPQ).

The protein belongs to the muscleblind family.

It localises to the nucleus. Functionally, binds to RNA with repeat sequences CUG and CCUG. The sequence is that of Muscleblind-like protein from Caenorhabditis briggsae.